Reading from the N-terminus, the 1481-residue chain is Cystic fibrosis transmembrane conductance regulator (1481 aa).

The Cytoplasmic segment spans residues 1 to 77 (MQRSPLEKAS…KLINALRRCF (77 aa)). Residues 78 to 98 (FWRFMFYGILLYLGEVTKAVQ) form a helical membrane-spanning segment. One can recognise an ABC transmembrane type-1 1 domain in the interval 81–365 (FMFYGILLYL…WAVQTWYDSL (285 aa)). At 99–122 (PLLLGRIIASYDPDNKEERSIAIY) the chain is on the extracellular side. Residues 123 to 146 (LGIGLCLLFIVRTLLLHPAIFGLH) traverse the membrane as a helical segment. At 147–195 (HIGMQMRIAMFSLIYKKTLKLSSRVLDKISIGQLVSLLSNNLNKFDEGL) the chain is on the cytoplasmic side. The chain crosses the membrane as a helical span at residues 196–216 (ALAHFVWIVPLQVALLMGLIW). Over 217–222 (ELLQAS) the chain is Extracellular. Residues 223–243 (AFCGLGFLIVLALFQAGLGRM) traverse the membrane as a helical segment. At 244–298 (MMKYRDQRAGKINERLVITSEMIENIQSVKAYCWEEAMEKMIENLRQTELKLTRK) the chain is on the cytoplasmic side. A helical transmembrane segment spans residues 299–319 (AAYVRYFNSSAFFFSGFFVVF). Residues 320–339 (LSVLPYALIKGIVLRKIFTT) lie on the Extracellular side of the membrane. Residues 340–358 (ISFCIVLRMAVTRQFPWAV) traverse the membrane as a helical segment. Residues 359–858 (QTWYDSLGAI…YLRYITVHKS (500 aa)) lie on the Cytoplasmic side of the membrane. ATP-binding positions include tryptophan 401, serine 434, 458–465 (GSTGAGKT), and glutamine 493. An ABC transporter 1 domain is found at 423-646 (NDDDSLFFSN…RPDFSSKLMG (224 aa)). Cysteine 524 is lipidated: S-palmitoyl cysteine. Residues serine 549 and serine 660 each carry the phosphoserine modification. A disordered R region region spans residues 654–831 (SAERRNSILT…EEINEEDLKE (178 aa)). Serine 670 is modified (phosphoserine; by PKA). Phosphoserine is present on serine 686. A Glycyl lysine isopeptide (Lys-Gly) (interchain with G-Cter in ubiquitin) cross-link involves residue lysine 688. 2 positions are modified to phosphoserine: serine 700 and serine 712. Phosphothreonine is present on threonine 717. 6 positions are modified to phosphoserine: serine 737, serine 753, serine 768, serine 790, serine 795, and serine 813. The chain crosses the membrane as a helical span at residues 859 to 879 (LIFVLIWCLVIFLAEVAASLV). The ABC transmembrane type-1 2 domain maps to 859–1155 (LIFVLIWCLV…AVNSSIDVDS (297 aa)). Residues 880 to 918 (VLWFLGNTPPQDKGNSTYSRNNSYAVIITRTSSYYVFYI) are Extracellular-facing. Asparagine 894 and asparagine 900 each carry an N-linked (GlcNAc...) asparagine glycan. A discontinuously helical transmembrane segment spans residues 919–939 (YVGVADTLLAMGFFRGLPLVH). Over 940-990 (TLITVSKILHHKMLHSVLQAPMSTLNTLKAGGILNRFSKDIAILDDLLPLT) the chain is Cytoplasmic. Residues 991-1011 (IFDFIQLLLIVIGAIAVVAVL) form a helical membrane-spanning segment. Residues 1012-1013 (QP) are Extracellular-facing. The chain crosses the membrane as a helical span at residues 1014–1034 (YIFVATVPVIVAFIMLRAYFL). The Cytoplasmic segment spans residues 1035-1095 (QTSQQLKQLE…TANWFLYLST (61 aa)). A helical membrane pass occupies residues 1096-1116 (LRWFQMRIEMIFVIFFIAVTF). Over 1117–1130 (ISILTTGEGEGTVG) the chain is Extracellular. Residues 1131-1151 (IILTLAMNIMSTLQWAVNSSI) form a helical membrane-spanning segment. At 1152-1481 (DVDSLMRSVS…TEEEVQDTRL (330 aa)) the chain is on the cytoplasmic side. In terms of domain architecture, ABC transporter 2 spans 1211-1444 (MTVKDLTAKY…RSLFRQAISP (234 aa)). ATP is bound by residues tyrosine 1220 and 1245 to 1252 (GRTGSGKS). Positions 1387–1481 (RTLKQAFADC…TEEEVQDTRL (95 aa)) are interaction with GORASP2. The S-palmitoyl cysteine moiety is linked to residue cysteine 1396. Serine 1445 and serine 1457 each carry phosphoserine. The disordered stretch occupies residues 1462-1481 (QPQIAALKEETEEEVQDTRL). Residues 1471–1481 (ETEEEVQDTRL) are compositionally biased toward acidic residues. Positions 1479 to 1481 (TRL) match the PDZ-binding motif.

This sequence belongs to the ABC transporter superfamily. ABCC family. CFTR transporter (TC 3.A.1.202) subfamily. In terms of assembly, monomer; does not require oligomerization for channel activity. May form oligomers in the membrane. Interacts with SLC26A3, SLC26A6 and NHERF1. Interacts with SHANK2. Interacts with MYO6. Interacts (via C-terminus) with GOPC (via PDZ domain); this promotes CFTR internalization and thereby decreases channel activity. Interacts with SLC4A7 through NHERF1. Found in a complex with MYO5B and RAB11A. Interacts with ANO1. Interacts with SLC26A8. Interacts with AHCYL1; the interaction increases CFTR activity. Interacts with CSE1L. The core-glycosylated form interacts with GORASP2 (via PDZ GRASP-type 1 domain) in respone to ER stress. Interacts with MARCHF2; the interaction leads to CFTR ubiqtuitination and degradation. Interacts with ADGRG2. In terms of processing, N-glycosylated. Post-translationally, phosphorylated; cAMP treatment promotes phosphorylation and activates the channel. Dephosphorylation decreases the ATPase activity (in vitro). Phosphorylation at PKA sites activates the channel. Phosphorylation at PKC sites enhances the response to phosphorylation by PKA. Phosphorylated by AMPK; this inhibits channel activity. Ubiquitinated, leading to its degradation in the lysosome. Deubiquitination by USP10 in early endosomes enhances its endocytic recycling to the cell membrane. Ubiquitinated by RNF185 during ER stress. Ubiquitinated by MARCHF2.

The protein localises to the apical cell membrane. The protein resides in the early endosome membrane. It is found in the cell membrane. Its subcellular location is the recycling endosome membrane. It localises to the endoplasmic reticulum membrane. The protein localises to the nucleus. It catalyses the reaction ATP + H2O + closed Cl(-) channel = ADP + phosphate + open Cl(-) channel.. The enzyme catalyses chloride(in) = chloride(out). It carries out the reaction hydrogencarbonate(in) = hydrogencarbonate(out). The catalysed reaction is ATP + H2O = ADP + phosphate + H(+). Epithelial ion channel that plays an important role in the regulation of epithelial ion and water transport and fluid homeostasis. Mediates the transport of chloride ions across the cell membrane. Possesses an intrinsic ATPase activity and utilizes ATP to gate its channel; the passive flow of anions through the channel is gated by cycles of ATP binding and hydrolysis by the ATP-binding domains. The ion channel is also permeable to HCO(3)(-); selectivity depends on the extracellular chloride concentration. Exerts its function also by modulating the activity of other ion channels and transporters. Contributes to the regulation of the pH and the ion content of the epithelial fluid layer. Modulates the activity of the epithelial sodium channel (ENaC) complex, in part by regulating the cell surface expression of the ENaC complex. May regulate bicarbonate secretion and salvage in epithelial cells by regulating the transporter SLC4A7. Can inhibit the chloride channel activity of ANO1. Plays a role in the chloride and bicarbonate homeostasis during sperm epididymal maturation and capacitation. The chain is Cystic fibrosis transmembrane conductance regulator from Chlorocebus aethiops (Green monkey).